The chain runs to 290 residues: Enoyl-CoA hydratase, mitochondrial (290 aa).

A mitochondrion-targeting transit peptide spans 1 to 27 (MAALRALLPRACSSLLSSVRCPELRRF). 98 to 101 (ADIK) contributes to the substrate binding site. Lysine 101 carries the N6-acetyllysine; alternate modification. Lysine 101 carries the post-translational modification N6-succinyllysine; alternate. Serine 114 carries the phosphoserine modification. Lysine 115 carries the post-translational modification N6-acetyllysine; alternate. Lysine 115 bears the N6-succinyllysine; alternate mark. Glycine 141 is a binding site for substrate. Residue lysine 204 is modified to N6-succinyllysine. At lysine 211 the chain carries N6-acetyllysine. Residue lysine 217 is modified to N6-acetyllysine; alternate. N6-succinyllysine; alternate is present on lysine 217.

Belongs to the enoyl-CoA hydratase/isomerase family. As to quaternary structure, homohexamer; dimer of trimers. In terms of processing, acetylation of Lys-101 is observed in liver mitochondria from fasted mice but not from fed mice.

The protein resides in the mitochondrion matrix. The enzyme catalyses a (3S)-3-hydroxyacyl-CoA = a (2E)-enoyl-CoA + H2O. It catalyses the reaction a (3E)-enoyl-CoA = a 4-saturated (2E)-enoyl-CoA. The catalysed reaction is (3E)-hexenoyl-CoA = (2E)-hexenoyl-CoA. It carries out the reaction (3S)-3-hydroxybutanoyl-CoA = (2E)-butenoyl-CoA + H2O. The enzyme catalyses 3-hydroxyisovaleryl-CoA = 3-methylbut-2-enoyl-CoA + H2O. It catalyses the reaction 3-hydroxypropanoyl-CoA = acryloyl-CoA + H2O. The catalysed reaction is 3-hydroxybutanoyl-CoA = (2E)-butenoyl-CoA + H2O. It carries out the reaction 2-methylpropenoyl-CoA + H2O = (S)-3-hydroxyisobutanoyl-CoA. The enzyme catalyses (3S)-hydroxyhexanoyl-CoA = (2E)-hexenoyl-CoA + H2O. It catalyses the reaction (3S)-hydroxydecanoyl-CoA = (2E)-decenoyl-CoA + H2O. It functions in the pathway lipid metabolism; fatty acid beta-oxidation. Its function is as follows. Converts unsaturated trans-2-enoyl-CoA species ((2E)-enoyl-CoA) to the corresponding (3S)-3-hydroxyacyl-CoA species through addition of a water molecule to the double bond. Catalyzes the hydration of medium- and short-chained fatty enoyl-CoA thioesters from 4 carbons long (C4) up to C16. Has high substrate specificity for crotonyl-CoA ((2E)-butenoyl-CoA) and moderate specificity for acryloyl-CoA, 3-methylcrotonyl-CoA (3-methyl-(2E)-butenoyl-CoA) and methacrylyl-CoA ((2E)-2-methylpropenoyl-CoA). Can bind tiglyl-CoA (2-methylcrotonoyl-CoA), but hydrates only a small amount of this substrate. Plays a key role in the beta-oxidation spiral of short- and medium-chain fatty acid oxidation. At a lower rate than the hydratase reaction, catalyzes the isomerase reaction of trans-3-enoyl-CoA species (such as (3E)-hexenoyl-CoA) to trans-2-enoyl-CoA species (such as (2E)-hexenoyl-CoA), which are subsequently hydrated to 3(S)-3-hydroxyacyl-CoA species (such as (3S)-hydroxyhexanoyl-CoA). In Mus musculus (Mouse), this protein is Enoyl-CoA hydratase, mitochondrial.